The primary structure comprises 179 residues: MSRIGKAEIKLPDKVEVKQENANIKVKGPLGELFTPIFEGISVKTENGIVKLERSNEDQKVVALHGLTRALLMNCVKGVSQGWEKNLEITGVGYRAQKRGEDLVMSLGFSHEVVYKAPKGIKIDVQEQLKIKVSGIDKQLVGQVAADIRSKRPPEPYKGKGIKYAEEFIKKKAGKTGKK.

It belongs to the universal ribosomal protein uL6 family. In terms of assembly, part of the 50S ribosomal subunit.

This protein binds to the 23S rRNA, and is important in its secondary structure. It is located near the subunit interface in the base of the L7/L12 stalk, and near the tRNA binding site of the peptidyltransferase center. The chain is Large ribosomal subunit protein uL6 from Leptospira interrogans serogroup Icterohaemorrhagiae serovar copenhageni (strain Fiocruz L1-130).